The primary structure comprises 58 residues: Small ribosomal subunit protein bS21 (58 aa).

This sequence belongs to the bacterial ribosomal protein bS21 family.

The chain is Small ribosomal subunit protein bS21 from Staphylococcus saprophyticus subsp. saprophyticus (strain ATCC 15305 / DSM 20229 / NCIMB 8711 / NCTC 7292 / S-41).